A 372-amino-acid polypeptide reads, in one-letter code: Isoliquiritigenin 2'-O-methyltransferase (372 aa).

S-adenosyl-L-methionine contacts are provided by Gly217, Asp240, Asp260, Met261, and Lys274. His278 serves as the catalytic Proton acceptor.

Belongs to the class I-like SAM-binding methyltransferase superfamily. Cation-independent O-methyltransferase family. COMT subfamily. Monomer. Homodimer. In terms of tissue distribution, roots (at protein level). Expressed mainly in roots, and to a lesser extent in root nodules. In the roots, expression is not detected in the root tip or the cells immediately behind the tip, but is detected in tissues starting 1.5-2.0 mm distal to the root tip. Detected in the epidermal and cortical cells of 2 day old roots, with lower levels in vascular tissue.

It catalyses the reaction isoliquiritigenin + S-adenosyl-L-methionine = 2'-O-methylisoliquiritigenin + S-adenosyl-L-homocysteine + H(+). It carries out the reaction licodione + S-adenosyl-L-methionine = 2'-O-methyllicodione + S-adenosyl-L-homocysteine + H(+). Inhibited by 1 mM Co(2+), Cu(2+), Zn(2+) or Fe(2+). Non-competitively inhibited by S-adenosyl-L-homocysteine. Competitively inhibited by 2'-O-methylisoliquiritigenin. Its function is as follows. Methylates the 2'-hydroxyl of isoliquiritigenin and licodione. Does not methylate narigenin chalcone, caffeic acid or daidzein. Involved in the root nodulation initiation by promoting the biosynthesis of nod-inducing molecules. The sequence is that of Isoliquiritigenin 2'-O-methyltransferase from Medicago sativa (Alfalfa).